The following is a 189-amino-acid chain: Thymidine kinase (189 aa).

ATP is bound by residues 9–16 (GTMNSGKT) and 85–88 (DESQ). The active-site Proton acceptor is Glu86. Residues Cys143, Cys146, Cys180, and His183 each coordinate Zn(2+).

This sequence belongs to the thymidine kinase family. As to quaternary structure, homotetramer.

Its subcellular location is the cytoplasm. The enzyme catalyses thymidine + ATP = dTMP + ADP + H(+). This Streptococcus pyogenes serotype M18 (strain MGAS8232) protein is Thymidine kinase.